The sequence spans 355 residues: DNA polymerase IV (355 aa).

The 185-residue stretch at 14-198 (IIHVDMDAFF…LPVEKFHGVG (185 aa)) folds into the UmuC domain. The Mg(2+) site is built by aspartate 18 and aspartate 116. Glutamate 117 is an active-site residue.

Belongs to the DNA polymerase type-Y family. As to quaternary structure, monomer. Requires Mg(2+) as cofactor.

Its subcellular location is the cytoplasm. The enzyme catalyses DNA(n) + a 2'-deoxyribonucleoside 5'-triphosphate = DNA(n+1) + diphosphate. In terms of biological role, poorly processive, error-prone DNA polymerase involved in untargeted mutagenesis. Copies undamaged DNA at stalled replication forks, which arise in vivo from mismatched or misaligned primer ends. These misaligned primers can be extended by PolIV. Exhibits no 3'-5' exonuclease (proofreading) activity. May be involved in translesional synthesis, in conjunction with the beta clamp from PolIII. The polypeptide is DNA polymerase IV (Streptococcus suis (strain 98HAH33)).